The primary structure comprises 131 residues: Large ribosomal subunit protein bL17 (131 aa).

Belongs to the bacterial ribosomal protein bL17 family. Part of the 50S ribosomal subunit. Contacts protein L32.

The protein is Large ribosomal subunit protein bL17 of Bordetella avium (strain 197N).